Reading from the N-terminus, the 223-residue chain is Endonuclease NucS (223 aa).

The protein belongs to the NucS endonuclease family.

The protein localises to the cytoplasm. In terms of biological role, cleaves both 3' and 5' ssDNA extremities of branched DNA structures. This Mycolicibacterium vanbaalenii (strain DSM 7251 / JCM 13017 / BCRC 16820 / KCTC 9966 / NRRL B-24157 / PYR-1) (Mycobacterium vanbaalenii) protein is Endonuclease NucS.